The sequence spans 227 residues: uncharacterized protein (227 aa).

Helical transmembrane passes span 109 to 128, 173 to 192, and 199 to 221; these read MCNVGLVLMMVFAAFYFAGI, AILLSVTLLALTPVIGILLT, and ALRVIFLVIAVEFVYAIFRVMMG.

The protein localises to the cell membrane. This is an uncharacterized protein from Archaeoglobus fulgidus (strain ATCC 49558 / DSM 4304 / JCM 9628 / NBRC 100126 / VC-16).